We begin with the raw amino-acid sequence, 317 residues long: tRNA(Ile)-lysidine synthase (317 aa).

Position 30-35 (S30–S35) interacts with ATP.

It belongs to the tRNA(Ile)-lysidine synthase family.

The protein resides in the cytoplasm. It catalyses the reaction cytidine(34) in tRNA(Ile2) + L-lysine + ATP = lysidine(34) in tRNA(Ile2) + AMP + diphosphate + H(+). Ligates lysine onto the cytidine present at position 34 of the AUA codon-specific tRNA(Ile) that contains the anticodon CAU, in an ATP-dependent manner. Cytidine is converted to lysidine, thus changing the amino acid specificity of the tRNA from methionine to isoleucine. This chain is tRNA(Ile)-lysidine synthase, found in Chlamydia caviae (strain ATCC VR-813 / DSM 19441 / 03DC25 / GPIC) (Chlamydophila caviae).